The primary structure comprises 300 residues: Quinolinate synthase (300 aa).

His21 and Ser38 together coordinate iminosuccinate. A [4Fe-4S] cluster-binding site is contributed by Cys83. Residues 109-111 (YVN) and Ser126 each bind iminosuccinate. Cys170 contacts [4Fe-4S] cluster. Iminosuccinate-binding positions include 196–198 (HPE) and Thr213. Position 256 (Cys256) interacts with [4Fe-4S] cluster.

Belongs to the quinolinate synthase family. Type 2 subfamily. As to quaternary structure, monomer. Homodimer. The cofactor is [4Fe-4S] cluster.

It is found in the cytoplasm. The enzyme catalyses iminosuccinate + dihydroxyacetone phosphate = quinolinate + phosphate + 2 H2O + H(+). It participates in cofactor biosynthesis; NAD(+) biosynthesis; quinolinate from iminoaspartate: step 1/1. In terms of biological role, catalyzes the condensation of iminoaspartate with dihydroxyacetone phosphate to form quinolinate. This chain is Quinolinate synthase, found in Pyrococcus horikoshii (strain ATCC 700860 / DSM 12428 / JCM 9974 / NBRC 100139 / OT-3).